The following is a 367-amino-acid chain: Female-specific protein transformer (367 aa).

Residues 86–280 (ESISSKKIKS…HRHHRSQERS (195 aa)) are disordered. The span at 109–129 (VKQNSPDVTQKFTKKYGSSEN) shows a compositional bias: polar residues. The segment covering 130–144 (PDFRRHSSYEKDNYH) has biased composition (basic and acidic residues). A compositionally biased stretch (basic residues) spans 195-223 (NRRRSSHRSRRGSGSPRSRRYTSRHRRRS). Basic and acidic residues predominate over residues 229–238 (TSWKHNPEHR). A compositionally biased stretch (basic residues) spans 239-257 (TSRRSRTRSPRGNRSRRRS).

Functionally, sex differentiation protein controlling female somatic sexual differentiation. May act by promoting the formation of a splicing enhancer complex. The polypeptide is Female-specific protein transformer (Musca domestica (House fly)).